The following is a 476-amino-acid chain: Transposase for transposon Tn5 (476 aa).

The segment at 1–70 (MITSALHRAA…YRFIRNPNVS (70 aa)) is interaction with DNA. Residues Asp97 and Asp188 each coordinate Mg(2+). Interaction with DNA stretches follow at residues 237-255 (YQIS…KRKN) and 319-348 (YTHR…EPDN). Position 326 (Glu326) interacts with Mg(2+). The interval 369-476 (SFTLPQALRA…KDLMAQGIKI (108 aa)) is important for dimerization.

The protein belongs to the transposase 11 family. Monomer. Homodimer of tnp (isoform 1), and heterodimer of tnp (isoform 1) and inh (isoform 2). Mg(2+) is required as a cofactor.

Its function is as follows. Mediates transposition of transposon Tn5 by a 'cut and paste' mechanism. First, the monomeric transposase binds the 19 bp inverted DNA repeats flanking the transposon. Then, dimerization of the DNA-bound transposase creates a synaptic DNA complex. After nicking of the first DNA strand, excision of the transposon proceeds through a series of intermediates. The transposase then mediates the insertion of the transposon at a new site by strand transfer. The activity of the wild-type transposase is very low, and is further inhibited by dimerization with the transposase inhibitor (inh). This Escherichia coli protein is Transposase for transposon Tn5 (tnpA).